A 349-amino-acid polypeptide reads, in one-letter code: Ion-translocating oxidoreductase complex subunit D (349 aa).

Helical transmembrane passes span 20-40, 42-62, 83-105, and 120-140; these read IMFL…YFFG, GVLI…IIIL, VLLG…CFFA, and IFNP…VHMT. T184 carries the post-translational modification FMN phosphoryl threonine. A run of 5 helical transmembrane segments spans residues 212 to 232, 236 to 256, 263 to 283, 291 to 311, and 319 to 339; these read IVSI…CFLL, VICW…SSIT, FFCS…AFFI, SCTK…VWII, and DGIA…DAYL.

Belongs to the NqrB/RnfD family. The complex is composed of six subunits: RnfA, RnfB, RnfC, RnfD, RnfE and RnfG. It depends on FMN as a cofactor.

The protein localises to the cell inner membrane. In terms of biological role, part of a membrane-bound complex that couples electron transfer with translocation of ions across the membrane. The chain is Ion-translocating oxidoreductase complex subunit D from Buchnera aphidicola subsp. Schizaphis graminum (strain Sg).